A 200-amino-acid chain; its full sequence is Holliday junction branch migration complex subunit RuvA (200 aa).

The segment at 1-63 (MYAYVKGKLT…EDAQLLYGFS (63 aa)) is domain I. Residues 64–142 (SEEEKDMFLS…ITEEDSDSLL (79 aa)) are domain II. The flexible linker stretch occupies residues 143–149 (QVDATST). The segment at 150 to 200 (EQDQFVQEAMLALEALGYSKRELAKVEKTLNKNKYDSVDEAVKAGLQLVVS) is domain III.

Belongs to the RuvA family. As to quaternary structure, homotetramer. Forms an RuvA(8)-RuvB(12)-Holliday junction (HJ) complex. HJ DNA is sandwiched between 2 RuvA tetramers; dsDNA enters through RuvA and exits via RuvB. An RuvB hexamer assembles on each DNA strand where it exits the tetramer. Each RuvB hexamer is contacted by two RuvA subunits (via domain III) on 2 adjacent RuvB subunits; this complex drives branch migration. In the full resolvosome a probable DNA-RuvA(4)-RuvB(12)-RuvC(2) complex forms which resolves the HJ.

It is found in the cytoplasm. Functionally, the RuvA-RuvB-RuvC complex processes Holliday junction (HJ) DNA during genetic recombination and DNA repair, while the RuvA-RuvB complex plays an important role in the rescue of blocked DNA replication forks via replication fork reversal (RFR). RuvA specifically binds to HJ cruciform DNA, conferring on it an open structure. The RuvB hexamer acts as an ATP-dependent pump, pulling dsDNA into and through the RuvAB complex. HJ branch migration allows RuvC to scan DNA until it finds its consensus sequence, where it cleaves and resolves the cruciform DNA. This chain is Holliday junction branch migration complex subunit RuvA, found in Staphylococcus aureus (strain MRSA252).